A 475-amino-acid polypeptide reads, in one-letter code: BTB/POZ domain-containing protein 10 (475 aa).

A disordered region spans residues 1-143 (MAGRPHPYDG…SSQSSSDGSC (143 aa)). Residues 22–31 (LHSRPRKLYK) are compositionally biased toward basic residues. Residues 57 to 80 (GHERSRDRRRSSDRSRDSSHERTE) show a composition bias toward basic and acidic residues. The segment covering 81–94 (SQLTPCIRNVTSPT) has biased composition (polar residues). The segment covering 97-107 (HHVEREKDHSS) has biased composition (basic and acidic residues). Residues 108-142 (SRPSSPRPQKASPNGSISSAGNSSRNSSQSSSDGS) show a composition bias toward low complexity. The segment at 146–475 (AGEMVFVYEN…LDPDAQNPTL (330 aa)) is interaction with AKT family members. Positions 167–241 (ERVTLIVDNT…YKTGIIRCPD (75 aa)) constitute a BTB domain. A disordered region spans residues 456–475 (PIHPPSGNSDLDPDAQNPTL).

Interacts (via C-terminal 330-amino-acid region) with AKT1; AKT2 and AKT3. Interacts with PPP2CA and PPP1CA.

It localises to the nucleus. Its subcellular location is the cytoplasm. In terms of biological role, plays a major role as an activator of AKT family members by inhibiting PPP2CA-mediated dephosphorylation, thereby keeping AKTs activated. Plays a role in preventing motor neuronal death and in accelerating the growth of pancreatic beta cells. The chain is BTB/POZ domain-containing protein 10 (BTBD10) from Pongo abelii (Sumatran orangutan).